A 73-amino-acid chain; its full sequence is Large ribosomal subunit protein bL31 (73 aa).

Belongs to the bacterial ribosomal protein bL31 family. Type A subfamily. Part of the 50S ribosomal subunit.

Functionally, binds the 23S rRNA. This is Large ribosomal subunit protein bL31 from Allorhizobium ampelinum (strain ATCC BAA-846 / DSM 112012 / S4) (Agrobacterium vitis (strain S4)).